The chain runs to 164 residues: MGDLPGLVRLSIALRIQPNDGPVFYKVDGQRFGQNRTIKLLTGSSYKVEVKIKPTTLQVENISIGGVVVPLELKSKEPDGDRIVYTGTYDTEGVAPTKSGERQPIQITMPFTDIGTFETMWQVKFYNYHKRDHCQWGSPFSVIEYECKPNETRSLMWVNKESFL.

Belongs to the CNRIP family. As to quaternary structure, interacts with the cannabinoid receptor CNR1 (via C-terminus). Does not interact with cannabinoid receptor CNR2.

In terms of biological role, suppresses cannabinoid receptor CNR1-mediated tonic inhibition of voltage-gated calcium channels. This is CB1 cannabinoid receptor-interacting protein 1 (CNRIP1) from Bos taurus (Bovine).